A 353-amino-acid chain; its full sequence is 3-dehydroquinate synthase (353 aa).

NAD(+) contacts are provided by residues 62–67 (DGEQYK), 96–100 (GVIGD), 120–121 (TT), Lys133, and Lys142. Positions 175, 236, and 253 each coordinate Zn(2+).

The protein belongs to the sugar phosphate cyclases superfamily. Dehydroquinate synthase family. NAD(+) is required as a cofactor. Requires Co(2+) as cofactor. The cofactor is Zn(2+).

The protein resides in the cytoplasm. It carries out the reaction 7-phospho-2-dehydro-3-deoxy-D-arabino-heptonate = 3-dehydroquinate + phosphate. The protein operates within metabolic intermediate biosynthesis; chorismate biosynthesis; chorismate from D-erythrose 4-phosphate and phosphoenolpyruvate: step 2/7. Its function is as follows. Catalyzes the conversion of 3-deoxy-D-arabino-heptulosonate 7-phosphate (DAHP) to dehydroquinate (DHQ). This chain is 3-dehydroquinate synthase, found in Helicobacter hepaticus (strain ATCC 51449 / 3B1).